The primary structure comprises 187 residues: MPKPTKGPRLGGGPAHERLMLANLAQSLFEHKSIKTTETKAKRLRPVAERLVTFAKRGDLHARRRVMGIIPSKSVVHELFTEIAPLVAERDGGYTRITKLGFRKGDNAPMVQIELVLEPVTPKVRSSRTSTATAPAAAAPAAEAPAEESDVPVEETDAVEHTDETPAETTDEAAAEVEADAAEKSDK.

Residues 122–187 form a disordered region; the sequence is PKVRSSRTST…EADAAEKSDK (66 aa). The span at 127 to 144 shows a compositional bias: low complexity; sequence SRTSTATAPAAAAPAAEA. Acidic residues-rich tracts occupy residues 145–157 and 165–180; these read PAEE…EETD and TPAE…VEAD.

It belongs to the bacterial ribosomal protein bL17 family. In terms of assembly, part of the 50S ribosomal subunit. Contacts protein L32.

In Clavibacter michiganensis subsp. michiganensis (strain NCPPB 382), this protein is Large ribosomal subunit protein bL17.